A 163-amino-acid polypeptide reads, in one-letter code: SKP1-like protein 4 (163 aa).

Residues 105–163 form an interaction with the F-box domain of F-box proteins region; sequence ILAANYLNIGGLLDLTCKAVADQMRGKTPEQMRAHFNIKNDYTPEEEAEVRNENKWAFE.

It belongs to the SKP1 family. In terms of assembly, part of a SCF (SKP1-cullin-F-box) protein ligase complex. Interacts with At1g56610, At1g67340, At3g62230, At3g59000, At4g27050, At1g55000, SKIP16 and SKIP32. In terms of tissue distribution, mostly expressed in inflorescence and siliques, and, to a lower extent, in seedlings, roots, and stems.

The protein resides in the nucleus. Its pathway is protein modification; protein ubiquitination. Involved in ubiquitination and subsequent proteasomal degradation of target proteins. Together with CUL1, RBX1 and a F-box protein, it forms a SCF E3 ubiquitin ligase complex. The functional specificity of this complex depends on the type of F-box protein. In the SCF complex, it serves as an adapter that links the F-box protein to CUL1. The protein is SKP1-like protein 4 (ASK4) of Arabidopsis thaliana (Mouse-ear cress).